The following is a 427-amino-acid chain: Enolase (427 aa).

Residue Gln162 coordinates (2R)-2-phosphoglycerate. The active-site Proton donor is the Glu204. Residues Asp241, Glu284, and Asp311 each coordinate Mg(2+). Residues Lys336, Arg365, Ser366, and Lys387 each contribute to the (2R)-2-phosphoglycerate site. Lys336 (proton acceptor) is an active-site residue.

It belongs to the enolase family. It depends on Mg(2+) as a cofactor.

It is found in the cytoplasm. Its subcellular location is the secreted. The protein localises to the cell surface. The enzyme catalyses (2R)-2-phosphoglycerate = phosphoenolpyruvate + H2O. It participates in carbohydrate degradation; glycolysis; pyruvate from D-glyceraldehyde 3-phosphate: step 4/5. Functionally, catalyzes the reversible conversion of 2-phosphoglycerate (2-PG) into phosphoenolpyruvate (PEP). It is essential for the degradation of carbohydrates via glycolysis. The sequence is that of Enolase from Natranaerobius thermophilus (strain ATCC BAA-1301 / DSM 18059 / JW/NM-WN-LF).